The primary structure comprises 194 residues: CMRF35-like molecule 5 (194 aa).

Residues Met1–Ala18 form the signal peptide. Residues Ala19–Asn125 form the Ig-like V-type domain. Over Ala19 to His165 the chain is Extracellular. A glycan (N-linked (GlcNAc...) asparagine) is linked at Asn28. Residues Cys39 and Cys107 are joined by a disulfide bond. The chain crosses the membrane as a helical span at residues Phe166–Trp186. Residues Val187–Ser194 are Cytoplasmic-facing.

Belongs to the CD300 family. As to quaternary structure, forms complexes with the CD300 family members with exception of CD300c. In terms of processing, N-glycosylated. As to expression, expression seems restricted to cells of myeloid lineage.

It is found in the cell membrane. This chain is CMRF35-like molecule 5 (CD300LD), found in Homo sapiens (Human).